A 456-amino-acid chain; its full sequence is Maturase-like protein 1 (456 aa).

The protein to group II intron maturases.

It is found in the plastid. Its function is as follows. Could be required for group III intron excision. In Euglena longa (Euglenophycean alga), this protein is Maturase-like protein 1 (mat1).